A 311-amino-acid polypeptide reads, in one-letter code: Phosphoribosylamine--glycine ligase (311 aa).

The ATP-grasp domain occupies 1-191 (DPRVRKQYIQ…LVQVLLAACR (191 aa)).

It belongs to the GARS family.

The protein resides in the plastid. It localises to the chloroplast. It carries out the reaction 5-phospho-beta-D-ribosylamine + glycine + ATP = N(1)-(5-phospho-beta-D-ribosyl)glycinamide + ADP + phosphate + H(+). It participates in purine metabolism; IMP biosynthesis via de novo pathway; N(1)-(5-phospho-D-ribosyl)glycinamide from 5-phospho-alpha-D-ribose 1-diphosphate: step 2/2. The polypeptide is Phosphoribosylamine--glycine ligase (PUR2) (Vigna unguiculata (Cowpea)).